A 337-amino-acid polypeptide reads, in one-letter code: Putative 4-hydroxythreonine-4-phosphate dehydrogenase (337 aa).

A divalent metal cation is bound by residues H172, H216, and H271.

It belongs to the PdxA family. As to quaternary structure, homodimer. Zn(2+) is required as a cofactor. Mg(2+) serves as cofactor. It depends on Co(2+) as a cofactor.

The protein resides in the cytoplasm. It catalyses the reaction 4-(phosphooxy)-L-threonine + NAD(+) = 3-amino-2-oxopropyl phosphate + CO2 + NADH. Its pathway is cofactor biosynthesis; pyridoxine 5'-phosphate biosynthesis; pyridoxine 5'-phosphate from D-erythrose 4-phosphate: step 4/5. Functionally, catalyzes the NAD(P)-dependent oxidation of 4-(phosphooxy)-L-threonine (HTP) into 2-amino-3-oxo-4-(phosphooxy)butyric acid which spontaneously decarboxylates to form 3-amino-2-oxopropyl phosphate (AHAP). The polypeptide is Putative 4-hydroxythreonine-4-phosphate dehydrogenase (Pasteurella multocida (strain Pm70)).